We begin with the raw amino-acid sequence, 624 residues long: Poly(A)-specific ribonuclease PARN (624 aa).

Residues aspartate 28 and glutamate 30 each coordinate a divalent metal cation. One can recognise an R3H domain in the interval 171–238 (KKFIDQVIEK…ERHIVISKVD (68 aa)). Residue lysine 213 is modified to N6-acetyllysine. A divalent metal cation contacts are provided by aspartate 285 and aspartate 375. Lysine 492 is modified (N6-acetyllysine). The residue at position 523 (serine 523) is a Phosphoserine. Serine 543 is modified (phosphoserine; by MAPKAPK2). The disordered stretch occupies residues 551–612 (GKRTLSPDPR…ELSLAGSVSD (62 aa)). Acidic residues predominate over residues 567-579 (RESEEVSDSELEQ). Serine 569, serine 573, and serine 575 each carry phosphoserine. Basic residues predominate over residues 592-601 (KKSKKLKRMK). A phosphoserine mark is found at serine 605, serine 609, and serine 613.

The protein belongs to the CAF1 family. As to quaternary structure, homodimer. Found in a mRNA decay complex with RENT1, RENT2 and RENT3B. Interacts with KHSRP. Interacts with CELF1/CUGBP1. Interacts with ZC3HAV1 in an RNA-independent manner. Interacts with DHX36. The cofactor is Mg(2+). In terms of processing, phosphorylation by MAPKAPK2, preventing GADD45A mRNA degradation after genotoxic stress.

Its subcellular location is the nucleus. The protein resides in the cytoplasm. It localises to the nucleolus. It catalyses the reaction Exonucleolytic cleavage of poly(A) to 5'-AMP.. Its function is as follows. 3'-exoribonuclease that has a preference for poly(A) tails of mRNAs, thereby efficiently degrading poly(A) tails. Exonucleolytic degradation of the poly(A) tail is often the first step in the decay of eukaryotic mRNAs and is also used to silence certain maternal mRNAs translationally during oocyte maturation and early embryonic development. Interacts with both the 3'-end poly(A) tail and the 5'-end cap structure during degradation, the interaction with the cap structure being required for an efficient degradation of poly(A) tails. Involved in nonsense-mediated mRNA decay, a critical process of selective degradation of mRNAs that contain premature stop codons. Also involved in degradation of inherently unstable mRNAs that contain AU-rich elements (AREs) in their 3'-UTR, possibly via its interaction with KHSRP. Probably mediates the removal of poly(A) tails of AREs mRNAs, which constitutes the first step of destabilization. Also able to recognize poly(A) tails of microRNAs such as MIR21 and H/ACA box snoRNAs (small nucleolar RNAs) leading to leading to microRNAs degradation or snoRNA increased stability. The sequence is that of Poly(A)-specific ribonuclease PARN (Parn) from Mus musculus (Mouse).